The sequence spans 192 residues: Protein hunchback (192 aa).

Disordered regions lie at residues 16-59, 88-108, and 151-192; these read SHHH…SNTN, AAMT…WPGL, and ALTP…KYMA. Residues 17-31 show a composition bias toward basic residues; the sequence is HHHHHHHAHHSRRQH. Residues 92–103 show a composition bias toward polar residues; it reads PSPSNNDQNSPL. Residues 173–192 are compositionally biased toward basic and acidic residues; sequence EPEKEHDLMSNSSEDMKYMA.

This sequence belongs to the hunchback C2H2-type zinc-finger protein family.

Its subcellular location is the nucleus. In terms of biological role, gap class segmentation protein that controls development of head structures. The chain is Protein hunchback (hb) from Drosophila adiastola (Fruit fly).